We begin with the raw amino-acid sequence, 732 residues long: Coagulation factor XIII A chain (732 aa).

Residues 1–26 (MSDTPASTFGGRRAVPPNNSNAAEVD) form a disordered region. Ser2 is subject to N-acetylserine. The propeptide at 2–38 (SDTPASTFGGRRAVPPNNSNAAEVDLPTEELQGLVPR) is activation peptide. Active-site residues include Cys315, His374, and Asp397. Residues Asn437, Asp439, Glu486, and Glu491 each coordinate Ca(2+). Residue Asn614 is glycosylated (N-linked (GlcNAc...) asparagine).

The protein belongs to the transglutaminase superfamily. Transglutaminase family. As to quaternary structure, tetramer of two A chains (F13A1) and two B (F13B) chains. Requires Ca(2+) as cofactor. Post-translationally, the activation peptide is released by thrombin.

Its subcellular location is the cytoplasm. The protein resides in the secreted. It carries out the reaction L-glutaminyl-[protein] + L-lysyl-[protein] = [protein]-L-lysyl-N(6)-5-L-glutamyl-[protein] + NH4(+). Its function is as follows. Factor XIII is activated by thrombin and calcium ion to a transglutaminase that catalyzes the formation of gamma-glutamyl-epsilon-lysine cross-links between fibrin chains, thus stabilizing the fibrin clot. Also cross-link alpha-2-plasmin inhibitor, or fibronectin, to the alpha chains of fibrin. The chain is Coagulation factor XIII A chain (F13a1) from Mus musculus (Mouse).